The following is an 84-amino-acid chain: Small ribosomal subunit protein bS20 (84 aa).

It belongs to the bacterial ribosomal protein bS20 family.

Its function is as follows. Binds directly to 16S ribosomal RNA. This Levilactobacillus brevis (strain ATCC 367 / BCRC 12310 / CIP 105137 / JCM 1170 / LMG 11437 / NCIMB 947 / NCTC 947) (Lactobacillus brevis) protein is Small ribosomal subunit protein bS20.